We begin with the raw amino-acid sequence, 432 residues long: Putative O-antigen transporter (432 aa).

Helical transmembrane passes span 14-34 (IIAA…LVSV), 47-67 (AVFT…IGIG), 90-110 (AAVH…FFLS), 134-154 (FIAS…KILF), 164-184 (IINA…HYLM), 189-209 (ITFA…IYIS), 234-254 (GFLI…IVMS), 271-291 (IFGL…PVCA), 305-325 (IIFL…LFIY), 334-354 (IIAN…LAVY), 376-396 (ILWL…WYFA), and 400-420 (GIVG…FWGL).

Its subcellular location is the cell inner membrane. It functions in the pathway bacterial outer membrane biogenesis; LPS O-antigen biosynthesis. In terms of biological role, may be involved in the translocation process of the nascent O-polysaccharide molecules and/or its ligation to lipid A core units. The polypeptide is Putative O-antigen transporter (rfbX) (Salmonella typhi).